A 668-amino-acid chain; its full sequence is Fructose-1,6-bisphosphatase class 3 (668 aa).

It belongs to the FBPase class 3 family. It depends on Mn(2+) as a cofactor.

It catalyses the reaction beta-D-fructose 1,6-bisphosphate + H2O = beta-D-fructose 6-phosphate + phosphate. Its pathway is carbohydrate biosynthesis; gluconeogenesis. This chain is Fructose-1,6-bisphosphatase class 3, found in Clostridium botulinum (strain 657 / Type Ba4).